The primary structure comprises 316 residues: Homoserine kinase (316 aa).

Residue 97–107 coordinates ATP; the sequence is PPARGLGSSAS.

The protein belongs to the GHMP kinase family. Homoserine kinase subfamily.

The protein resides in the cytoplasm. It carries out the reaction L-homoserine + ATP = O-phospho-L-homoserine + ADP + H(+). The protein operates within amino-acid biosynthesis; L-threonine biosynthesis; L-threonine from L-aspartate: step 4/5. In terms of biological role, catalyzes the ATP-dependent phosphorylation of L-homoserine to L-homoserine phosphate. The sequence is that of Homoserine kinase from Prochlorococcus marinus (strain MIT 9313).